A 342-amino-acid chain; its full sequence is RNA 3'-terminal phosphate cyclase (342 aa).

Residues Q103 and 283–287 each bind ATP; that span reads YLADQ. Catalysis depends on H308, which acts as the Tele-AMP-histidine intermediate.

Belongs to the RNA 3'-terminal cyclase family. Type 1 subfamily.

It localises to the cytoplasm. It catalyses the reaction a 3'-end 3'-phospho-ribonucleotide-RNA + ATP = a 3'-end 2',3'-cyclophospho-ribonucleotide-RNA + AMP + diphosphate. In terms of biological role, catalyzes the conversion of 3'-phosphate to a 2',3'-cyclic phosphodiester at the end of RNA. The mechanism of action of the enzyme occurs in 3 steps: (A) adenylation of the enzyme by ATP; (B) transfer of adenylate to an RNA-N3'P to produce RNA-N3'PP5'A; (C) and attack of the adjacent 2'-hydroxyl on the 3'-phosphorus in the diester linkage to produce the cyclic end product. The biological role of this enzyme is unknown but it is likely to function in some aspects of cellular RNA processing. The sequence is that of RNA 3'-terminal phosphate cyclase (rtcA) from Escherichia coli O157:H7.